The sequence spans 520 residues: Beta-galactoside-specific lectin 4 (520 aa).

An N-linked (GlcNAc...) asparagine glycan is attached at Asn-107. Residue Glu-159 is part of the active site. A disulfide bridge links Cys-240 with Cys-266. A propeptide spans 241–265 (connecting peptide); sequence GERPSSSDVRYWPLVIRPVIADDVT. Positions 269–396 constitute a Ricin B-type lectin 1 domain; it reads SEPTVRIVGR…YTLGQGWLAG (128 aa). A D-galactose-binding site is contributed by 284–286; the sequence is DVR. Asn-322 is a glycosylation site (N-linked (GlcNAc...) asparagine). A disulfide bridge links Cys-325 with Cys-342. 2 N-linked (GlcNAc...) asparagine glycosylation sites follow: Asn-357 and Asn-397. Residues 400–520 form the Ricin B-type lectin 2 domain; that stretch reads APREVTIYGF…KPNQMWLPVP (121 aa). 2 disulfide bridges follow: Cys-413–Cys-426 and Cys-451–Cys-467. 494–496 is a D-galactose binding site; sequence DVA.

Belongs to the ribosome-inactivating protein family. Type 2 RIP subfamily. Disulfide-linked dimer of A and B chains.

The enzyme catalyses Endohydrolysis of the N-glycosidic bond at one specific adenosine on the 28S rRNA.. In terms of biological role, the A chain is responsible for inhibiting protein synthesis through the catalytic inactivation of 60S ribosomal subunits by removing adenine from position 4,324 of 28S rRNA. The B chain binds to cell receptors and probably facilitates the entry into the cell of the A chain; B chains are also responsible for cell agglutination (lectin activity). Inhibits growth of the human tumor cell line Molt4. The polypeptide is Beta-galactoside-specific lectin 4 (Viscum album (European mistletoe)).